The sequence spans 230 residues: Leucyl/phenylalanyl-tRNA--protein transferase (230 aa).

The protein belongs to the L/F-transferase family.

It is found in the cytoplasm. The catalysed reaction is N-terminal L-lysyl-[protein] + L-leucyl-tRNA(Leu) = N-terminal L-leucyl-L-lysyl-[protein] + tRNA(Leu) + H(+). The enzyme catalyses N-terminal L-arginyl-[protein] + L-leucyl-tRNA(Leu) = N-terminal L-leucyl-L-arginyl-[protein] + tRNA(Leu) + H(+). It catalyses the reaction L-phenylalanyl-tRNA(Phe) + an N-terminal L-alpha-aminoacyl-[protein] = an N-terminal L-phenylalanyl-L-alpha-aminoacyl-[protein] + tRNA(Phe). Its function is as follows. Functions in the N-end rule pathway of protein degradation where it conjugates Leu, Phe and, less efficiently, Met from aminoacyl-tRNAs to the N-termini of proteins containing an N-terminal arginine or lysine. This chain is Leucyl/phenylalanyl-tRNA--protein transferase, found in Erwinia tasmaniensis (strain DSM 17950 / CFBP 7177 / CIP 109463 / NCPPB 4357 / Et1/99).